The chain runs to 131 residues: Large-conductance mechanosensitive channel (131 aa).

The next 2 helical transmembrane spans lie at 21–41 and 76–96; these read VGVI…ADVI and GMFI…FLMI.

Belongs to the MscL family. Homopentamer.

The protein resides in the cell inner membrane. Channel that opens in response to stretch forces in the membrane lipid bilayer. May participate in the regulation of osmotic pressure changes within the cell. The chain is Large-conductance mechanosensitive channel from Histophilus somni (strain 129Pt) (Haemophilus somnus).